The chain runs to 404 residues: S-adenosylmethionine synthase (404 aa).

His18 contributes to the ATP binding site. A Mg(2+)-binding site is contributed by Asp20. Glu46 provides a ligand contact to K(+). Glu59 and Gln102 together coordinate L-methionine. A flexible loop region spans residues 102-112 (QSPEIAQGVDH). ATP is bound by residues 178–180 (DGK), 249–250 (KF), Asp258, 264–265 (RK), Ala281, and Lys285. L-methionine is bound at residue Asp258. Lys289 contacts L-methionine.

It belongs to the AdoMet synthase family. In terms of assembly, homotetramer; dimer of dimers. The cofactor is Mg(2+). K(+) is required as a cofactor.

Its subcellular location is the cytoplasm. It carries out the reaction L-methionine + ATP + H2O = S-adenosyl-L-methionine + phosphate + diphosphate. Its pathway is amino-acid biosynthesis; S-adenosyl-L-methionine biosynthesis; S-adenosyl-L-methionine from L-methionine: step 1/1. In terms of biological role, catalyzes the formation of S-adenosylmethionine (AdoMet) from methionine and ATP. The overall synthetic reaction is composed of two sequential steps, AdoMet formation and the subsequent tripolyphosphate hydrolysis which occurs prior to release of AdoMet from the enzyme. The sequence is that of S-adenosylmethionine synthase from Rhodococcus jostii (strain RHA1).